The primary structure comprises 609 residues: Heat shock factor protein (609 aa).

Residues 1–33 (MIQTASTISSNGGTNQGMESSSANSPEMNGTQN) show a composition bias toward polar residues. Residues 1 to 47 (MIQTASTISSNGGTNQGMESSSANSPEMNGTQNSMSVGMSGSGSSQN) form a disordered region. A compositionally biased stretch (low complexity) spans 34-45 (SMSVGMSGSGSS). Residues 50–156 (ITQFSNKLYN…LLCLVTRKKA (107 aa)) mediate DNA binding. Disordered stretches follow at residues 255–298 (PTVS…GKYR), 310–371 (SSFN…TDPK), 411–445 (NNTS…QPVQ), and 567–609 (SNGN…SIGA). Polar residues-rich tracts occupy residues 257–277 (VSPT…TTAN), 339–360 (DSFN…TDVP), 422–443 (YRGS…NLQP), and 567–597 (SNGN…SSPR). Ser350 is subject to Phosphoserine. A compositionally biased stretch (basic residues) spans 598–609 (QVRKKRKSSIGA).

It belongs to the HSF family. As to quaternary structure, homotrimer.

It localises to the nucleus. Its function is as follows. DNA-binding protein that specifically binds heat shock promoter elements (HSE) and activates transcription. Also required for growth at normal temperatures. This chain is Heat shock factor protein (hsf1), found in Schizosaccharomyces pombe (strain 972 / ATCC 24843) (Fission yeast).